We begin with the raw amino-acid sequence, 83 residues long: Probable calcium-binding protein CML28 (83 aa).

EF-hand domains follow at residues 5–40 (TEKAEHDRIFKKFDANGDGKISAAELGDALKNLGSV) and 43–75 (EDIKRMMAEIDTDGDGYISYQEFIDFASANRGL). Positions 18, 20, 22, 24, 29, 53, 55, 57, 59, and 64 each coordinate Ca(2+).

Potential calcium sensor. This is Probable calcium-binding protein CML28 (CML28) from Arabidopsis thaliana (Mouse-ear cress).